A 721-amino-acid polypeptide reads, in one-letter code: Catalase-peroxidase (721 aa).

The tryptophyl-tyrosyl-methioninium (Trp-Tyr) (with M-238) cross-link spans 89 to 212 (WHSAGTYRTG…LAAVQMGLIY (124 aa)). The active-site Proton acceptor is His90. A cross-link (tryptophyl-tyrosyl-methioninium (Tyr-Met) (with W-89)) is located at residues 212–238 (YVNPEGPNGDPDPFAAAVDIRETFARM). His253 serves as a coordination point for heme b.

This sequence belongs to the peroxidase family. Peroxidase/catalase subfamily. In terms of assembly, homodimer or homotetramer. Heme b is required as a cofactor. Post-translationally, formation of the three residue Trp-Tyr-Met cross-link is important for the catalase, but not the peroxidase activity of the enzyme.

The catalysed reaction is H2O2 + AH2 = A + 2 H2O. It catalyses the reaction 2 H2O2 = O2 + 2 H2O. Its function is as follows. Bifunctional enzyme with both catalase and broad-spectrum peroxidase activity. The polypeptide is Catalase-peroxidase (Shewanella baltica (strain OS195)).